A 194-amino-acid polypeptide reads, in one-letter code: A-type ATP synthase subunit E (194 aa).

This sequence belongs to the V-ATPase E subunit family. As to quaternary structure, has multiple subunits with at least A(3), B(3), C, D, E, F, H, I and proteolipid K(x).

It is found in the cell membrane. In terms of biological role, component of the A-type ATP synthase that produces ATP from ADP in the presence of a proton gradient across the membrane. The protein is A-type ATP synthase subunit E of Saccharolobus solfataricus (strain ATCC 35092 / DSM 1617 / JCM 11322 / P2) (Sulfolobus solfataricus).